Consider the following 665-residue polypeptide: Auxin response factor 1 (665 aa).

Residues 124–226 constitute a DNA-binding region (TF-B3); the sequence is FCKTLTASDT…ELRVGVRRHM (103 aa). 3 disordered regions span residues 356 to 408, 496 to 542, and 645 to 665; these read VANS…SVPL, PVPS…RQIR, and KADA…AGSR. Composition is skewed to polar residues over residues 497 to 519, 530 to 542, and 651 to 665; these read VPSN…SDIP, LRSP…RQIR, and NGNT…AGSR. In terms of domain architecture, PB1 spans 542 to 635; the sequence is RSCTKVHMQG…EVKKLSPKNK (94 aa).

The protein belongs to the ARF family. As to quaternary structure, homodimers and heterodimers. Interacts with the auxin-responsive proteins IAA12, IAA13, IAA17 and with ARF2. Binds to RIN13 in the nucleus. Expressed in the whole plant.

It is found in the nucleus. The protein localises to the cytoplasm. Auxin response factors (ARFs) are transcriptional factors that bind specifically to the DNA sequence 5'-TGTCTC-3' found in the auxin-responsive promoter elements (AuxREs). Seems to act as transcriptional repressor. Formation of heterodimers with Aux/IAA proteins may alter their ability to modulate early auxin response genes expression. Promotes flowering, stamen development, floral organ abscission and fruit dehiscence. Acts as a repressor of IAA2, IAA3 and IAA7. Together with RIN13, promotes leaf senescence and cell death. The polypeptide is Auxin response factor 1 (Arabidopsis thaliana (Mouse-ear cress)).